The sequence spans 139 residues: Large ribosomal subunit protein uL16 (139 aa).

Basic residues predominate over residues 1 to 19; it reads MLIPRKVKHRKQHHPKRSG. The tract at residues 1 to 22 is disordered; that stretch reads MLIPRKVKHRKQHHPKRSGVAK.

It belongs to the universal ribosomal protein uL16 family. As to quaternary structure, part of the 50S ribosomal subunit.

Binds 23S rRNA and is also seen to make contacts with the A and possibly P site tRNAs. This chain is Large ribosomal subunit protein uL16, found in Acidothermus cellulolyticus (strain ATCC 43068 / DSM 8971 / 11B).